The primary structure comprises 500 residues: Cytochrome P450 71B36 (500 aa).

Residues 1 to 21 traverse the membrane as a helical segment; that stretch reads MATILFLSLLFLSCILLAAFT. Heme is bound at residue Cys440.

Belongs to the cytochrome P450 family. Heme is required as a cofactor.

Its subcellular location is the membrane. The protein is Cytochrome P450 71B36 (CYP71B36) of Arabidopsis thaliana (Mouse-ear cress).